Here is a 481-residue protein sequence, read N- to C-terminus: MFS transporter eqxG (481 aa).

Residues 1-13 (MATTDPAIAAPDD) are compositionally biased toward low complexity. Residues 1-58 (MATTDPAIAAPDDSQLEAGRENIRANVGDALEKPSSSTGTMVDEPTDPNVVDWDGPHD) form a disordered region. Residue N64 is glycosylated (N-linked (GlcNAc...) asparagine). Residues 72 to 92 (LHLVIVSLFTLAANLAATMFA) form a helical membrane-spanning segment. Residue N106 is glycosylated (N-linked (GlcNAc...) asparagine). 10 consecutive transmembrane segments (helical) span residues 111–131 (AMTV…LAPL), 146–166 (FVYV…MFLV), 169–189 (IICG…VADL), 201–221 (LFTV…TVIF), 276–296 (PIVL…FLLF), 315–335 (GLAY…FSVL), 353–373 (LILM…YGWT), 380–400 (WIVP…VVIP), 403–423 (IYLV…ANLL), and 439–459 (LYVS…CLLF).

This sequence belongs to the major facilitator superfamily.

Its subcellular location is the cell membrane. Functionally, efflux pump that might be required for efficient secretion of equisetin or other secondary metabolies produced by the equisetin gene cluster. In Fusarium heterosporum, this protein is MFS transporter eqxG.